The sequence spans 153 residues: Acylphosphatase-like protein MJ0553 (153 aa).

The 99-residue stretch at 4–102 (TYELIIYGRV…SRLSSDDILE (99 aa)) folds into the Acylphosphatase-like domain.

The sequence is that of Acylphosphatase-like protein MJ0553 from Methanocaldococcus jannaschii (strain ATCC 43067 / DSM 2661 / JAL-1 / JCM 10045 / NBRC 100440) (Methanococcus jannaschii).